The following is a 376-amino-acid chain: Lipoyl synthase 1, mitochondrial (376 aa).

The [4Fe-4S] cluster site is built by C109, C114, C120, C140, C144, C147, and S356. The 221-residue stretch at 125–345 (ETGTATATIM…QTLGMEMGFR (221 aa)) folds into the Radical SAM core domain.

The protein belongs to the radical SAM superfamily. Lipoyl synthase family. It depends on [4Fe-4S] cluster as a cofactor.

The protein localises to the mitochondrion. It catalyses the reaction [[Fe-S] cluster scaffold protein carrying a second [4Fe-4S](2+) cluster] + N(6)-octanoyl-L-lysyl-[protein] + 2 oxidized [2Fe-2S]-[ferredoxin] + 2 S-adenosyl-L-methionine + 4 H(+) = [[Fe-S] cluster scaffold protein] + N(6)-[(R)-dihydrolipoyl]-L-lysyl-[protein] + 4 Fe(3+) + 2 hydrogen sulfide + 2 5'-deoxyadenosine + 2 L-methionine + 2 reduced [2Fe-2S]-[ferredoxin]. It participates in protein modification; protein lipoylation via endogenous pathway; protein N(6)-(lipoyl)lysine from octanoyl-[acyl-carrier-protein]: step 2/2. In terms of biological role, catalyzes the radical-mediated insertion of two sulfur atoms into the C-6 and C-8 positions of the octanoyl moiety bound to the lipoyl domains of lipoate-dependent enzymes, thereby converting the octanoylated domains into lipoylated derivatives. This Pisum sativum (Garden pea) protein is Lipoyl synthase 1, mitochondrial.